Here is a 691-residue protein sequence, read N- to C-terminus: Mediator of RNA polymerase II transcription subunit 17 (691 aa).

Residues 158-185 (KLESFDAAANKLLQSAQRLEEDIAAETK) are a coiled coil.

The protein belongs to the Mediator complex subunit 17 family. In terms of assembly, component of the Mediator complex.

Its subcellular location is the nucleus. In terms of biological role, component of the Mediator complex, a coactivator involved in the regulated transcription of nearly all RNA polymerase II-dependent genes. Mediator functions as a bridge to convey information from gene-specific regulatory proteins to the basal RNA polymerase II transcription machinery. Mediator is recruited to promoters by direct interactions with regulatory proteins and serves as a scaffold for the assembly of a functional preinitiation complex with RNA polymerase II and the general transcription factors. The sequence is that of Mediator of RNA polymerase II transcription subunit 17 (SRB4) from Coccidioides immitis (strain RS) (Valley fever fungus).